We begin with the raw amino-acid sequence, 228 residues long: UPF0173 metal-dependent hydrolase lmo1577 (228 aa).

Belongs to the UPF0173 family.

The sequence is that of UPF0173 metal-dependent hydrolase lmo1577 from Listeria monocytogenes serovar 1/2a (strain ATCC BAA-679 / EGD-e).